The chain runs to 757 residues: Cellulose synthase-like protein B5 (757 aa).

The next 2 membrane-spanning stretches (helical) occupy residues 24–44 (AVDLTILGLLYSLLLYRILHI) and 50–70 (VWLLAFFCESCFSLVWLIFTC). Catalysis depends on residues D136 and D460. Helical transmembrane passes span 531 to 551 (LAYFWALMCLRSIPELIYCLL), 572 to 592 (IVTLVGMHCLYSLWQFMSLGF), 613 to 633 (LFSIQDIILKLLGISQIGFVI), 671 to 691 (LFIPGTFIMLVNLAALAGYLV), 704 to 724 (GSGLAEACGCILVVMLFLPFL), and 735 to 755 (IPLSTLSKAAFLTVLFVFFCV).

This sequence belongs to the glycosyltransferase 2 family. Plant cellulose synthase-like B subfamily. As to expression, expressed in young seedlings, primarily in the vascular tissue. Expressed in the root cap.

The protein localises to the golgi apparatus membrane. Functionally, thought to be a Golgi-localized beta-glycan synthase that polymerize the backbones of noncellulosic polysaccharides (hemicelluloses) of plant cell wall. The chain is Cellulose synthase-like protein B5 (CSLB5) from Arabidopsis thaliana (Mouse-ear cress).